The sequence spans 952 residues: UvrABC system protein A (952 aa).

38–45 contributes to the ATP binding site; the sequence is GLSGSGKS. The C4-type zinc-finger motif lies at 259–286; it reads CDKCGFSISELEPRLFSFNSPLGSCSYC. 2 consecutive ABC transporter domains span residues 316–595 and 615–944; these read FKNI…SNSI and GNGK…QYLS. 647–654 serves as a coordination point for ATP; that stretch reads GVSGSGKS. Residues 746-772 form a C4-type zinc finger; that stretch reads CDKCFGDGVIRIEMHFLPDVYVKCEVC.

The protein belongs to the ABC transporter superfamily. UvrA family. As to quaternary structure, forms a heterotetramer with UvrB during the search for lesions.

It localises to the cytoplasm. Functionally, the UvrABC repair system catalyzes the recognition and processing of DNA lesions. UvrA is an ATPase and a DNA-binding protein. A damage recognition complex composed of 2 UvrA and 2 UvrB subunits scans DNA for abnormalities. When the presence of a lesion has been verified by UvrB, the UvrA molecules dissociate. The sequence is that of UvrABC system protein A from Mycoplasma genitalium (strain ATCC 33530 / DSM 19775 / NCTC 10195 / G37) (Mycoplasmoides genitalium).